A 955-amino-acid polypeptide reads, in one-letter code: Glycine dehydrogenase (decarboxylating) (955 aa).

At lysine 702 the chain carries N6-(pyridoxal phosphate)lysine.

This sequence belongs to the GcvP family. In terms of assembly, the glycine cleavage system is composed of four proteins: P, T, L and H. Requires pyridoxal 5'-phosphate as cofactor.

It catalyses the reaction N(6)-[(R)-lipoyl]-L-lysyl-[glycine-cleavage complex H protein] + glycine + H(+) = N(6)-[(R)-S(8)-aminomethyldihydrolipoyl]-L-lysyl-[glycine-cleavage complex H protein] + CO2. In terms of biological role, the glycine cleavage system catalyzes the degradation of glycine. The P protein binds the alpha-amino group of glycine through its pyridoxal phosphate cofactor; CO(2) is released and the remaining methylamine moiety is then transferred to the lipoamide cofactor of the H protein. This chain is Glycine dehydrogenase (decarboxylating), found in Stenotrophomonas maltophilia (strain R551-3).